The following is a 416-amino-acid chain: Enolase (416 aa).

A (2R)-2-phosphoglycerate-binding site is contributed by glutamine 162. The Proton donor role is filled by glutamate 204. Residues aspartate 241, glutamate 282, and aspartate 309 each contribute to the Mg(2+) site. (2R)-2-phosphoglycerate is bound by residues lysine 334, arginine 363, serine 364, and lysine 385. The active-site Proton acceptor is the lysine 334.

Belongs to the enolase family. The cofactor is Mg(2+).

The protein localises to the cytoplasm. It is found in the secreted. It localises to the cell surface. The catalysed reaction is (2R)-2-phosphoglycerate = phosphoenolpyruvate + H2O. It functions in the pathway carbohydrate degradation; glycolysis; pyruvate from D-glyceraldehyde 3-phosphate: step 4/5. Its function is as follows. Catalyzes the reversible conversion of 2-phosphoglycerate (2-PG) into phosphoenolpyruvate (PEP). It is essential for the degradation of carbohydrates via glycolysis. The chain is Enolase from Campylobacter concisus (strain 13826).